The primary structure comprises 530 residues: Cytochrome P450 monooxygenase ausG (530 aa).

Residues 31–51 (LLVAYRLPGLLLLFSITIILF) form a helical membrane-spanning segment. Cysteine 470 lines the heme pocket.

This sequence belongs to the cytochrome P450 family. It depends on heme as a cofactor.

The protein resides in the membrane. Its pathway is secondary metabolite biosynthesis; terpenoid biosynthesis. In terms of biological role, cytochrome P450 monooxygenase; part of the gene cluster B that mediates the biosynthesis of the fungal meroterpenoid acetoxydehydroaustin. The first step of the pathway is the synthesis of 3,5-dimethylorsellinic acid by the polyketide synthase ausA. 3,5-dimethylorsellinic acid is then prenylated by the polyprenyl transferase ausN. Further epoxidation by the FAD-dependent monooxygenase ausM and cyclization by the probable terpene cyclase ausL lead to the formation of protoaustinoid A. Protoaustinoid A is then oxidized to spiro-lactone preaustinoid A3 by the combined action of the FAD-binding monooxygenases ausB and ausC, and the dioxygenase ausE. Acid-catalyzed keto-rearrangement and ring contraction of the tetraketide portion of preaustinoid A3 by ausJ lead to the formation of preaustinoid A4. The aldo-keto reductase ausK, with the help of ausH, is involved in the next step by transforming preaustinoid A4 into isoaustinone which is in turn hydroxylated by the P450 monooxygenase ausI to form austinolide. The cytochrome P450 monooxygenase ausG then modifies austinolide to austinol. Austinol is further acetylated to austin by the O-acetyltransferase ausP, which spontaneously changes to dehydroaustin. The cytochrome P450 monooxygenase then converts dehydroaustin is into 7-dehydrodehydroaustin. The hydroxylation catalyzed by ausR permits the second O-acetyltransferase ausQ to add an additional acetyl group to the molecule, leading to the formation of acetoxydehydroaustin. Due to genetic rearrangements of the clusters and the subsequent loss of some enzymes, the end product of the Penicillium brasilianum austinoid biosynthesis clusters is acetoxydehydroaustin. This Penicillium brasilianum protein is Cytochrome P450 monooxygenase ausG.